Consider the following 276-residue polypeptide: MEEQPLCTLSVKDLMEAGAHFGHQTRRWNPKMKLYIFEEKNGLYIINLAKTLYQLRNALPHVCKVIKENKPILFVGTKKQAKCVIKEAAIEAGEYFVAERWLGGMLTNMATIRNSIKTLDKIEKDLTQNSSCLTKKEIALLAKRHQKLLKNLEGIRYLRKIPGLVIVVDPSYEKIAVAEAKKLGIPVLALVDTNCDPTPIDYVVPCNDDSLKSIRLIISAIKDNIINTKKKLGVEIVSPIKTLSTEDGSEEIDIAAGDDNRKEDLLAKKYDSNEAN.

The protein belongs to the universal ribosomal protein uS2 family.

This chain is Small ribosomal subunit protein uS2, found in Chlamydia caviae (strain ATCC VR-813 / DSM 19441 / 03DC25 / GPIC) (Chlamydophila caviae).